The primary structure comprises 255 residues: MARRPLVMGNWKLNGSKAFTKELITGLKDELNAVSGCDVAIAPPVMYLAEAEAALVSSDIALGTQNVDLNKQGAFTGDISTEMLKDFGVKYVIIGHSERRQYHHESDEFIAKKFGVLKDAGLVPVLCIGESEAENEAGKTEEVCARQIDAVMNTLGVEAFNGAVIAYEPIWAIGTGKSATPAQAQAVHAFIRGHIAKQSQAVAERVIIQYGGSINDANAAELFTQPDIDGALVGGASLKASAFAVIVKAAAKAKN.

10 to 12 contacts substrate; that stretch reads NWK. His96 functions as the Electrophile in the catalytic mechanism. Catalysis depends on Glu168, which acts as the Proton acceptor. Substrate contacts are provided by residues Gly174, Ser213, and 234–235; that span reads GG.

The protein belongs to the triosephosphate isomerase family. As to quaternary structure, homodimer.

The protein localises to the cytoplasm. The enzyme catalyses D-glyceraldehyde 3-phosphate = dihydroxyacetone phosphate. The protein operates within carbohydrate biosynthesis; gluconeogenesis. Its pathway is carbohydrate degradation; glycolysis; D-glyceraldehyde 3-phosphate from glycerone phosphate: step 1/1. Functionally, involved in the gluconeogenesis. Catalyzes stereospecifically the conversion of dihydroxyacetone phosphate (DHAP) to D-glyceraldehyde-3-phosphate (G3P). The sequence is that of Triosephosphate isomerase from Histophilus somni (strain 2336) (Haemophilus somnus).